The chain runs to 282 residues: NADPH-dependent 7-cyano-7-deazaguanine reductase (282 aa).

Residue 88–90 coordinates substrate; that stretch reads IES. 90–91 is a binding site for NADPH; that stretch reads SK. The active-site Thioimide intermediate is cysteine 190. Aspartate 197 acts as the Proton donor in catalysis. 229 to 230 provides a ligand contact to substrate; that stretch reads HE. 258–259 serves as a coordination point for NADPH; it reads RG.

Belongs to the GTP cyclohydrolase I family. QueF type 2 subfamily. In terms of assembly, homodimer.

Its subcellular location is the cytoplasm. It catalyses the reaction 7-aminomethyl-7-carbaguanine + 2 NADP(+) = 7-cyano-7-deazaguanine + 2 NADPH + 3 H(+). It functions in the pathway tRNA modification; tRNA-queuosine biosynthesis. Its function is as follows. Catalyzes the NADPH-dependent reduction of 7-cyano-7-deazaguanine (preQ0) to 7-aminomethyl-7-deazaguanine (preQ1). In Salmonella paratyphi B (strain ATCC BAA-1250 / SPB7), this protein is NADPH-dependent 7-cyano-7-deazaguanine reductase.